Consider the following 108-residue polypeptide: UPF0060 membrane protein Msil_1658 (108 aa).

4 consecutive transmembrane segments (helical) span residues 5 to 25, 31 to 51, 62 to 82, and 88 to 108; these read LVYVAAALAEIAGCFSFWAWL, SLWLIPGTASLLLFAWLLTLI, AYGGVYVTVSLLWLWAMEGVW, and LGGATLCLIGAAIIILAPRPA.

The protein belongs to the UPF0060 family.

The protein localises to the cell inner membrane. The chain is UPF0060 membrane protein Msil_1658 from Methylocella silvestris (strain DSM 15510 / CIP 108128 / LMG 27833 / NCIMB 13906 / BL2).